The chain runs to 289 residues: Inorganic pyrophosphatase (289 aa).

S2 carries the N-acetylserine modification. Position 57 is an N6-acetyllysine (K57). Mg(2+) contacts are provided by D116, D121, and D153. Residue K228 is modified to N6-acetyllysine. S250 is subject to Phosphoserine.

This sequence belongs to the PPase family. Homodimer. It depends on Mg(2+) as a cofactor. Expressed ubiquitously.

It is found in the cytoplasm. The catalysed reaction is diphosphate + H2O = 2 phosphate + H(+). The polypeptide is Inorganic pyrophosphatase (PPA1) (Homo sapiens (Human)).